The chain runs to 420 residues: UDP-N-acetylglucosamine 1-carboxyvinyltransferase (420 aa).

22-23 (KN) is a phosphoenolpyruvate binding site. Position 92 (R92) interacts with UDP-N-acetyl-alpha-D-glucosamine. C116 (proton donor) is an active-site residue. 2-(S-cysteinyl)pyruvic acid O-phosphothioketal is present on C116. The UDP-N-acetyl-alpha-D-glucosamine site is built by D306 and I328.

Belongs to the EPSP synthase family. MurA subfamily.

It localises to the cytoplasm. It catalyses the reaction phosphoenolpyruvate + UDP-N-acetyl-alpha-D-glucosamine = UDP-N-acetyl-3-O-(1-carboxyvinyl)-alpha-D-glucosamine + phosphate. Its pathway is cell wall biogenesis; peptidoglycan biosynthesis. Cell wall formation. Adds enolpyruvyl to UDP-N-acetylglucosamine. This is UDP-N-acetylglucosamine 1-carboxyvinyltransferase from Blochmanniella floridana.